The chain runs to 129 residues: Small ribosomal subunit protein uS9 (129 aa).

Belongs to the universal ribosomal protein uS9 family.

The polypeptide is Small ribosomal subunit protein uS9 (Wolinella succinogenes (strain ATCC 29543 / DSM 1740 / CCUG 13145 / JCM 31913 / LMG 7466 / NCTC 11488 / FDC 602W) (Vibrio succinogenes)).